Consider the following 227-residue polypeptide: MDLQRIYDRRKSRLVDELAIAKYGMLGLMLMENAGRNVAYELLARTPCRRVVIVVGKGNNGGDGWVIARHLDAAGVDVIVLLTTAPNEFRGDAAVNYAIANLAKIKIIDLSRTPTAEAIATHFAEADWLVDAMLGTGATGEPRGAMRLAIEAINQSSVRTLAVDLPTGIDCDSGGAATVAVRADVTCTFVTLKPCCQVAACRSYLGEVRVIDIGVPRALLEEIDAMP.

A YjeF N-terminal domain is found at 12–221 (SRLVDELAIA…DIGVPRALLE (210 aa)). 59 to 63 (NNGGD) contributes to the (6S)-NADPHX binding site. Positions 60 and 131 each coordinate K(+). Residues 135-141 (GTGATGE) and aspartate 164 each bind (6S)-NADPHX. K(+) is bound at residue threonine 167.

This sequence belongs to the NnrE/AIBP family. It depends on K(+) as a cofactor.

The catalysed reaction is (6R)-NADHX = (6S)-NADHX. It carries out the reaction (6R)-NADPHX = (6S)-NADPHX. Catalyzes the epimerization of the S- and R-forms of NAD(P)HX, a damaged form of NAD(P)H that is a result of enzymatic or heat-dependent hydration. This is a prerequisite for the S-specific NAD(P)H-hydrate dehydratase to allow the repair of both epimers of NAD(P)HX. This chain is NAD(P)H-hydrate epimerase, found in Pirellula staleyi (strain ATCC 27377 / DSM 6068 / ICPB 4128) (Pirella staleyi).